Reading from the N-terminus, the 228-residue chain is Ephrin-A5 (228 aa).

A signal peptide spans 1–20 (MLHVEMLTLLFLVLWMCVFS). In terms of domain architecture, Ephrin RBD spans 29-162 (ADRYAVYWNS…KLKVFVRPTN (134 aa)). Residue Asn-37 is glycosylated (N-linked (GlcNAc...) asparagine). 2 disulfide bridges follow: Cys-62-Cys-102 and Cys-90-Cys-151. An N-linked (GlcNAc...) asparagine; atypical glycan is attached at Asn-162. Positions 186-205 (EPADDTVHESAEPSRGENAA) are disordered. The span at 190-200 (DTVHESAEPSR) shows a compositional bias: basic and acidic residues. Residue Asn-203 is the site of GPI-anchor amidated asparagine attachment. The propeptide at 204–228 (AAQTPRIPSRLLAILLFLLAMLLTL) is removed in mature form.

This sequence belongs to the ephrin family. Binds to the receptor tyrosine kinases EPHA2, EPHA3 and EPHB1. Forms a ternary EFNA5-EPHA3-ADAM10 complex mediating EFNA5 extracellular domain shedding by ADAM10 which regulates the EFNA5-EPHA3 complex internalization and function. Binds to EPHB2. Interacts with EPHA8; activates EPHA8. As to expression, expressed in myogenic progenitor cells.

The protein resides in the cell membrane. Its subcellular location is the membrane. It is found in the caveola. Its function is as follows. Cell surface GPI-bound ligand for Eph receptors, a family of receptor tyrosine kinases which are crucial for migration, repulsion and adhesion during neuronal, vascular and epithelial development. Binds promiscuously Eph receptors residing on adjacent cells, leading to contact-dependent bidirectional signaling into neighboring cells. The signaling pathway downstream of the receptor is referred to as forward signaling while the signaling pathway downstream of the ephrin ligand is referred to as reverse signaling. Induces compartmentalized signaling within a caveolae-like membrane microdomain when bound to the extracellular domain of its cognate receptor. This signaling event requires the activity of the Fyn tyrosine kinase. Activates the EPHA3 receptor to regulate cell-cell adhesion and cytoskeletal organization. With the receptor EPHA2 may regulate lens fiber cells shape and interactions and be important for lens transparency maintenance. May function actively to stimulate axon fasciculation. The interaction of EFNA5 with EPHA5 also mediates communication between pancreatic islet cells to regulate glucose-stimulated insulin secretion. Cognate/functional ligand for EPHA7, their interaction regulates brain development modulating cell-cell adhesion and repulsion. The protein is Ephrin-A5 (Efna5) of Mus musculus (Mouse).